Here is a 141-residue protein sequence, read N- to C-terminus: Nucleoside diphosphate kinase (141 aa).

The ATP site is built by lysine 11, phenylalanine 59, arginine 87, threonine 93, arginine 104, and asparagine 114. The active-site Pros-phosphohistidine intermediate is histidine 117.

This sequence belongs to the NDK family. As to quaternary structure, homotetramer. The cofactor is Mg(2+).

Its subcellular location is the cytoplasm. The enzyme catalyses a 2'-deoxyribonucleoside 5'-diphosphate + ATP = a 2'-deoxyribonucleoside 5'-triphosphate + ADP. It carries out the reaction a ribonucleoside 5'-diphosphate + ATP = a ribonucleoside 5'-triphosphate + ADP. In terms of biological role, major role in the synthesis of nucleoside triphosphates other than ATP. The ATP gamma phosphate is transferred to the NDP beta phosphate via a ping-pong mechanism, using a phosphorylated active-site intermediate. The chain is Nucleoside diphosphate kinase from Burkholderia mallei (strain NCTC 10247).